The primary structure comprises 791 residues: Endonuclease MutS2 (791 aa).

Gly337–Thr344 contacts ATP. The disordered stretch occupies residues Ala689–Glu715. Positions Ser703 to Ser713 are enriched in low complexity. Positions Leu716–Gln791 constitute a Smr domain.

The protein belongs to the DNA mismatch repair MutS family. MutS2 subfamily. In terms of assembly, homodimer. Binds to stalled ribosomes, contacting rRNA.

Its function is as follows. Endonuclease that is involved in the suppression of homologous recombination and thus may have a key role in the control of bacterial genetic diversity. Functionally, acts as a ribosome collision sensor, splitting the ribosome into its 2 subunits. Detects stalled/collided 70S ribosomes which it binds and splits by an ATP-hydrolysis driven conformational change. Acts upstream of the ribosome quality control system (RQC), a ribosome-associated complex that mediates the extraction of incompletely synthesized nascent chains from stalled ribosomes and their subsequent degradation. Probably generates substrates for RQC. This is Endonuclease MutS2 from Lactobacillus gasseri (strain ATCC 33323 / DSM 20243 / BCRC 14619 / CIP 102991 / JCM 1131 / KCTC 3163 / NCIMB 11718 / NCTC 13722 / AM63).